Reading from the N-terminus, the 223-residue chain is MNIAKMIDHTLLKPNATKSEIEKLCNEAKEYGFASVCINPCFVDLAYSMLKDTDVKVCTVIGFPLGANTIETKVFEAVEAVKKGATEVDMVLNISMLKSGDYDYVKKEIEEVVKAVKSYGDIVVKVILETCYLTVEEKVKACQLTKEAGADFVKTSTGFGPGGATVEDVKLMRQAVGENFGVKASGGVRTAEDAKAMIEAGANRIGASAGVKIVEEWNKLKMS.

Catalysis depends on Asp-89, which acts as the Proton donor/acceptor. Lys-154 (schiff-base intermediate with acetaldehyde) is an active-site residue. Lys-183 (proton donor/acceptor) is an active-site residue.

The protein belongs to the DeoC/FbaB aldolase family. DeoC type 1 subfamily.

It localises to the cytoplasm. The catalysed reaction is 2-deoxy-D-ribose 5-phosphate = D-glyceraldehyde 3-phosphate + acetaldehyde. The protein operates within carbohydrate degradation; 2-deoxy-D-ribose 1-phosphate degradation; D-glyceraldehyde 3-phosphate and acetaldehyde from 2-deoxy-alpha-D-ribose 1-phosphate: step 2/2. Functionally, catalyzes a reversible aldol reaction between acetaldehyde and D-glyceraldehyde 3-phosphate to generate 2-deoxy-D-ribose 5-phosphate. This chain is Deoxyribose-phosphate aldolase, found in Thermoanaerobacter sp. (strain X514).